Consider the following 493-residue polypeptide: Cysteine--tRNA ligase (493 aa).

C29 serves as a coordination point for Zn(2+). The short motif at 31-41 is the 'HIGH' region element; it reads VTVYDYCHIGH. Zn(2+) contacts are provided by C209, H234, and E238. The 'KMSKS' region signature appears at 266 to 270; the sequence is KMSKS. K269 is an ATP binding site.

This sequence belongs to the class-I aminoacyl-tRNA synthetase family. As to quaternary structure, monomer. Zn(2+) is required as a cofactor.

It localises to the cytoplasm. The enzyme catalyses tRNA(Cys) + L-cysteine + ATP = L-cysteinyl-tRNA(Cys) + AMP + diphosphate. In Pelobacter propionicus (strain DSM 2379 / NBRC 103807 / OttBd1), this protein is Cysteine--tRNA ligase.